The primary structure comprises 61 residues: Probradykinin-2 (61 aa).

The first 22 residues, 1-22 (MSFLKKSLFLVLFLGLVSFSIC), serve as a signal peptide directing secretion. Positions 23–50 (EEEKRETEEEENEDEIEEQSEEKKRFEP) are excised as a propeptide. The tract at residues 24–61 (EEKRETEEEENEDEIEEQSEEKKRFEPVPPGFTPFRQT) is disordered. The span at 30–42 (EEEENEDEIEEQS) shows a compositional bias: acidic residues. Pro52 is modified (4-hydroxyproline).

Belongs to the frog skin active peptide (FSAP) family. Bradykinin-related peptide subfamily. In terms of tissue distribution, expressed by the skin glands.

It localises to the secreted. May produce in vitro relaxation of rat arterial smooth muscle and constriction of intestinal smooth muscle. May target bradykinin receptors (BDKRB). The chain is Probradykinin-2 from Pithecopus azureus (Orange-legged monkey tree frog).